Consider the following 246-residue polypeptide: Large ribosomal subunit protein uL3 (246 aa).

The tract at residues serine 140–methionine 162 is disordered. Glutamine 151 is modified (N5-methylglutamine).

The protein belongs to the universal ribosomal protein uL3 family. In terms of assembly, part of the 50S ribosomal subunit. Forms a cluster with proteins L14 and L19. Post-translationally, methylated by PrmB.

One of the primary rRNA binding proteins, it binds directly near the 3'-end of the 23S rRNA, where it nucleates assembly of the 50S subunit. This Methylobacterium sp. (strain 4-46) protein is Large ribosomal subunit protein uL3.